A 423-amino-acid polypeptide reads, in one-letter code: Diels-Alderase cheD (423 aa).

The first 18 residues, 1–18, serve as a signal peptide directing secretion; it reads MKLCALFAGAVISTSAVA. N-linked (GlcNAc...) asparagine glycosylation is found at asparagine 84 and asparagine 132.

It belongs to the Diels-Alderase family.

It functions in the pathway secondary metabolite biosynthesis. Diels-Alderase; part of the gene cluster that mediates the biosynthesis of chaetoglobosin A which has a unique inhibitory activity against actin polymerization in mammalian cells. Chaetoglobosin A and its intermediates are involved in the morphological differentiation of C.globosum. The first step of the pathway is the synthesis of prochaetoglobosin I via condensation of one acetyl-CoA, 8 malonyl-CoA, and a L-tryptophan molecule by the PKS-NRPS hybrid synthetase cheA, followed by reduction of backbone double bond to install desired geometry by the enoyl reductase cheB. Further multiple oxidation steps performed by the cytochrome P450 monooxygenases cheE and cheG, as well as by the FAD-linked oxidoreductase cheF, lead to the formation of chaetoglobosin A. Depending on the order of action of these reductases, distinct intermediates can be identified. Within the pathway, the cytochrome P450 monooxygenase cheE catalyzes a stereospecific epoxidation on prochaetoglobosin I, cytoglobosin D, and chaetoglobosin J intermediates. The FAD-linked oxidoreductase cheF performs dehydrogenation of the C-20 hydroxyl groups in the 20-dihyrochaetoglobosin A and cytoglobosin D intermediates. Finally, the cytochrome P450 monooxygenase cheG can catalyze the stereospecific dihydroxylation of prochaetoglobosin I and prochaetoglobosin IV at C-19 and C-20, respectively. The Diels-Alderase cheD may play a role in the post-PKS-NRPS biosynthetic steps catalyzing Diels-Alder cyclization. This Chaetomium globosum (strain ATCC 6205 / CBS 148.51 / DSM 1962 / NBRC 6347 / NRRL 1970) (Soil fungus) protein is Diels-Alderase cheD.